The chain runs to 226 residues: Probable chemoreceptor glutamine deamidase CheD (226 aa).

This sequence belongs to the CheD family.

It carries out the reaction L-glutaminyl-[protein] + H2O = L-glutamyl-[protein] + NH4(+). Its function is as follows. Probably deamidates glutamine residues to glutamate on methyl-accepting chemotaxis receptors (MCPs), playing an important role in chemotaxis. The chain is Probable chemoreceptor glutamine deamidase CheD from Bordetella avium (strain 197N).